A 244-amino-acid polypeptide reads, in one-letter code: 14-3-3 protein beta/alpha-1 (244 aa).

Met1 bears the N-acetylmethionine mark.

Belongs to the 14-3-3 family. In terms of assembly, homodimer, and heterodimer with other family members. Expressed in brain, gill, heart, intestine, kidney, liver, ovary, skin, spleen and testis.

The protein localises to the cytoplasm. Functionally, adapter protein implicated in the regulation of a large spectrum of both general and specialized signaling pathways. Binds to a large number of partners, usually by recognition of a phosphoserine or phosphothreonine motif. Binding generally results in the modulation of the activity of the binding partner. The protein is 14-3-3 protein beta/alpha-1 of Oncorhynchus mykiss (Rainbow trout).